Consider the following 843-residue polypeptide: Potassium transporter 10 (843 aa).

A compositionally biased stretch (low complexity) spans 1–15; it reads MKSPSPVDPESPSSP. A disordered region spans residues 1 to 25; it reads MKSPSPVDPESPSSPDCKGGSSSKR. The Cytoplasmic portion of the chain corresponds to 1-34; the sequence is MKSPSPVDPESPSSPDCKGGSSSKRRRLPWRMTM. The helical transmembrane segment at 35 to 55 threads the bilayer; that stretch reads SLAYQSLGVVYGDLSTSPLYV. The Vacuolar segment spans residues 56–72; that stretch reads YKAAFAEDIQHSETNEE. A helical transmembrane segment spans residues 73–93; that stretch reads ILGVLSFVFWTLTLVPLLKYV. Topologically, residues 94–183 are cytoplasmic; sequence CVVLRADDNG…LLERHKVLQR (90 aa). A helical membrane pass occupies residues 184–204; that stretch reads VLLVLALVGTCMVIGDGVLTP. The Vacuolar portion of the chain corresponds to 205 to 225; the sequence is AISVFSAVSGLELSMEKHQHK. A helical membrane pass occupies residues 226–246; sequence YVEVPIACFVLVCLFCLQHYG. At 247–249 the chain is on the cytoplasmic side; sequence THR. The helical transmembrane segment at 250-270 threads the bilayer; that stretch reads VGFLFAPIVITWLLCISMIGV. Residues 271–298 are Vacuolar-facing; it reads YNIVHWEPNVYRALSPYYMYKFLKKTQR. Residues 299–319 traverse the membrane as a helical segment; sequence GGWMSLGGILLCITGSEAMFA. Over 320–326 the chain is Cytoplasmic; the sequence is DLGHFNQ. A helical transmembrane segment spans residues 327 to 347; that stretch reads LSIQIAFTCMVYPSLILAYMG. Over 348 to 377 the chain is Vacuolar; the sequence is QAAYLCKHHIIESDYRIGFYVSVPEKIRWP. A helical transmembrane segment spans residues 378-398; that stretch reads VLAIAILAAVVGSQAVITGTF. The Cytoplasmic segment spans residues 399–425; sequence SMIKQCTALGCFPRVKIVHTSDKVHGQ. A helical membrane pass occupies residues 426–446; that stretch reads IYIPEINWILMILCLAITIGF. The Vacuolar segment spans residues 447–451; the sequence is RDTKH. The chain crosses the membrane as a helical span at residues 452–472; sequence LGNASGLAVITVMLVTTCLMS. Topologically, residues 473–482 are cytoplasmic; the sequence is LVIVLCWHKS. A helical transmembrane segment spans residues 483-505; that stretch reads IFLAFGFIIFFGTIEALYFSASL. At 506 to 510 the chain is on the vacuolar side; that stretch reads IKFRE. A helical transmembrane segment spans residues 511 to 531; sequence GAWVPIVLAFIFMAIMCIWHY. At 532–843 the chain is on the cytoplasmic side; that stretch reads GTIKKYEFDL…TLEVGMIYYV (312 aa). Residues 667 to 747 are disordered; sequence AASSKPKNVC…IMSPSPSPPP (81 aa). The segment covering 718 to 735 has biased composition (gly residues); it reads GGSGSGSGRGSSRGGGGA.

The protein belongs to the HAK/KUP transporter (TC 2.A.72.3) family. In terms of tissue distribution, expressed in roots, shoots, and panicle at flowering stage.

The protein resides in the vacuole membrane. High-affinity potassium transporter. This is Potassium transporter 10 (HAK10) from Oryza sativa subsp. japonica (Rice).